The sequence spans 153 residues: Ribosome maturation factor RimP (153 aa).

The protein belongs to the RimP family.

The protein localises to the cytoplasm. Functionally, required for maturation of 30S ribosomal subunits. The protein is Ribosome maturation factor RimP of Clostridium botulinum (strain Kyoto / Type A2).